We begin with the raw amino-acid sequence, 150 residues long: Ribosome maturation factor RimP (150 aa).

It belongs to the RimP family.

It is found in the cytoplasm. In terms of biological role, required for maturation of 30S ribosomal subunits. This chain is Ribosome maturation factor RimP, found in Acidithiobacillus ferrooxidans (strain ATCC 23270 / DSM 14882 / CIP 104768 / NCIMB 8455) (Ferrobacillus ferrooxidans (strain ATCC 23270)).